Here is a 303-residue protein sequence, read N- to C-terminus: Probable cell division protein WhiA (303 aa).

The segment at residues 272-303 (SIQQIADSLETPLSKSGVNHRLRKINKIADEL) is a DNA-binding region (H-T-H motif).

Belongs to the WhiA family.

Its function is as follows. Involved in cell division and chromosome segregation. The polypeptide is Probable cell division protein WhiA (Streptococcus agalactiae serotype Ia (strain ATCC 27591 / A909 / CDC SS700)).